The chain runs to 2603 residues: Squalestatin tetraketide synthase (2603 aa).

Residues 29–455 enclose the Ketosynthase family 3 (KS3) domain; it reads TIPIAIIGMS…GANAHVILES (427 aa). Active-site for beta-ketoacyl synthase activity residues include cysteine 202, histidine 337, and histidine 377. Residues 463–512 are disordered; sequence IANGSGRSNGTGNGHNGANGTTNGHNGTNGTTNGHFDATQATNGHYGTDE. Over residues 469–479 the composition is skewed to gly residues; sequence RSNGTGNGHNG. Low complexity predominate over residues 480–497; it reads ANGTTNGHNGTNGTTNGH. A malonyl-CoA:ACP transacylase (MAT) domain region spans residues 608–931; that stretch reads VFTGQGAQWF…PYISCLLRGQ (324 aa). The interval 1000-1138 is N-terminal hotdog fold; the sequence is HDLLGSLIVG…GRITIEFDTS (139 aa). Positions 1000–1314 constitute a PKS/mFAS DH domain; the sequence is HDLLGSLIVG…NQSVGQMAPQ (315 aa). Residues 1000 to 1314 form a dehydratase (DH) domain region; it reads HDLLGSLIVG…NQSVGQMAPQ (315 aa). The active-site Proton acceptor; for dehydratase activity is histidine 1032. Positions 1157–1314 are C-terminal hotdog fold; sequence LMRSVDPSNL…NQSVGQMAPQ (158 aa). Catalysis depends on aspartate 1223, which acts as the Proton donor; for dehydratase activity. Residues 1465–1665 form a methyltransferase (CMet) domain region; sequence LYRYYTDAIK…GLDIELRDCD (201 aa). The tract at residues 1892–2205 is enoyl reductase (ER) (ER) domain; it reads GLIDTLQFSK…AGKHMGKIVI (314 aa). The ketoreductase (KR) domain stretch occupies residues 2228–2406; that stretch reads ASYLIVGGLG…AVSIDLGMVQ (179 aa). The region spanning 2516–2593 is the Carrier domain; it reads EAIDVVGRAI…ALATTVATKS (78 aa). The residue at position 2553 (serine 2553) is an O-(pantetheine 4'-phosphoryl)serine.

Its pathway is secondary metabolite biosynthesis. Its function is as follows. Highly reducing polyketide synthase (HR-PKS); part of the gene cluster that mediates the biosynthesis of squalestatin S1 (SQS1, also known as zaragozic acid A), a lead compound for the treatment of hyper-cholesterolemia by targeting squalene synthase (SS). Pks1 is responsible for the biosynthesis of the tetraketide sidechain of SQS1. The biosynthesis must involve 3 rounds of chain extension. After the first and second rounds methyl-transfer occurs, and in all rounds of extension the ketoreductase and dehydratase are active. The enoyl reductase and C-MeT are not active in the final round of extension. In Phoma sp. (strain C2932), this protein is Squalestatin tetraketide synthase.